Reading from the N-terminus, the 307-residue chain is Dihydroorotate dehydrogenase B (NAD(+)), catalytic subunit (307 aa).

FMN contacts are provided by residues Ser22 and 46 to 47; that span reads KG. Substrate contacts are provided by residues Lys46 and 70–74; that span reads NAVGL. Residues Asn100 and Asn128 each coordinate FMN. Residue Asn128 coordinates substrate. Catalysis depends on Cys131, which acts as the Nucleophile. Lys166 and Val192 together coordinate FMN. 193-194 is a binding site for substrate; sequence NT. FMN-binding positions include Gly218 and 244-245; that span reads GG.

It belongs to the dihydroorotate dehydrogenase family. Type 1 subfamily. Heterotetramer of 2 PyrK and 2 PyrD type B subunits. It depends on FMN as a cofactor.

It localises to the cytoplasm. The catalysed reaction is (S)-dihydroorotate + NAD(+) = orotate + NADH + H(+). It participates in pyrimidine metabolism; UMP biosynthesis via de novo pathway; orotate from (S)-dihydroorotate (NAD(+) route): step 1/1. Catalyzes the conversion of dihydroorotate to orotate with NAD(+) as electron acceptor. In Porphyromonas gingivalis (strain ATCC BAA-308 / W83), this protein is Dihydroorotate dehydrogenase B (NAD(+)), catalytic subunit (pyrD).